The sequence spans 146 residues: D-aminoacyl-tRNA deacylase (146 aa).

Positions Gly137–Pro138 match the Gly-cisPro motif, important for rejection of L-amino acids motif.

This sequence belongs to the DTD family. Homodimer.

The protein resides in the cytoplasm. The enzyme catalyses glycyl-tRNA(Ala) + H2O = tRNA(Ala) + glycine + H(+). It catalyses the reaction a D-aminoacyl-tRNA + H2O = a tRNA + a D-alpha-amino acid + H(+). Its function is as follows. An aminoacyl-tRNA editing enzyme that deacylates mischarged D-aminoacyl-tRNAs. Also deacylates mischarged glycyl-tRNA(Ala), protecting cells against glycine mischarging by AlaRS. Acts via tRNA-based rather than protein-based catalysis; rejects L-amino acids rather than detecting D-amino acids in the active site. By recycling D-aminoacyl-tRNA to D-amino acids and free tRNA molecules, this enzyme counteracts the toxicity associated with the formation of D-aminoacyl-tRNA entities in vivo and helps enforce protein L-homochirality. The protein is D-aminoacyl-tRNA deacylase of Bacillus cereus (strain Q1).